The primary structure comprises 569 residues: Urease subunit alpha (569 aa).

Residues Gly-132–Phe-569 enclose the Urease domain. Ni(2+) is bound by residues His-137, His-139, and Lys-220. Lys-220 bears the N6-carboxylysine mark. His-222 contacts substrate. Residues His-249 and His-275 each coordinate Ni(2+). The active-site Proton donor is His-323. Residue Asp-363 participates in Ni(2+) binding.

The protein belongs to the metallo-dependent hydrolases superfamily. Urease alpha subunit family. In terms of assembly, heterotrimer of UreA (gamma), UreB (beta) and UreC (alpha) subunits. Three heterotrimers associate to form the active enzyme. Ni cation serves as cofactor. In terms of processing, carboxylation allows a single lysine to coordinate two nickel ions.

It localises to the cytoplasm. The enzyme catalyses urea + 2 H2O + H(+) = hydrogencarbonate + 2 NH4(+). It participates in nitrogen metabolism; urea degradation; CO(2) and NH(3) from urea (urease route): step 1/1. The sequence is that of Urease subunit alpha from Dechloromonas aromatica (strain RCB).